The primary structure comprises 64 residues: Orcokinin peptides (64 aa).

2 consecutive propeptides follow at residues 1 to 6 (MNIRPG) and 23 to 24 (NI).

It belongs to the orcokinin family. In terms of tissue distribution, orcokinin-3 is expressed throughout the central nervous system (at protein level).

Its subcellular location is the secreted. In terms of biological role, myotropic peptides. The sequence is that of Orcokinin peptides from Camponotus floridanus (Florida carpenter ant).